Reading from the N-terminus, the 581-residue chain is MDADEVRERAGSLPREPGVYLFEQGRDDKRRVLYVGKAVDLRDRVRSYADPRSERIAKMVERAETIDFAVTDTETQALLLEANLIKRHRPPYNVRLKDDKSYPLVQLTDHPVPRIEVTRDPADGATVYGPFTDKGRVETVVKALREAYGLRGCSDHKYSNRDRPCLDYEMGICTAPCTGEIGEADYAEDAEAVTRYFEGETGVLADPLRREMEAAAQNQEFERAANLRDKLGAVEALHGEGDTAVSDSGGYQTTDVLGAAIEGERAIVARLHAEGGKLVERDRHTLEAPDGEGTAGVYRAFIPQYYAERELPDRILCAEAPADPDIEAWLESEGVTLGVPGAGREATLVDLALKNARQRGGTDDESGRLADALGIDHPSRIEGFDVSHAQGRSAVGSNVTFVDETPEKSDYRRKKLTEQNDDYANMRELLRWRATRAVEGRDDRPDPDLLLIDGGDGQLGAARDALAETGWDVPAIALAKDEELVITPDRVYDWNDDAPQLHLLQRIRDEAHRFAVQYHQTLRDEVSTTLDDVPGIGPETRKRLLRRFGSVDSVRAASDEELTAIDGIGEQTAETIRTRLQ.

Positions Arg-15 to Val-94 constitute a GIY-YIG domain. In terms of domain architecture, UVR spans Gly-202–Leu-237.

It belongs to the UvrC family. As to quaternary structure, interacts with UvrB in an incision complex.

The protein localises to the cytoplasm. The UvrABC repair system catalyzes the recognition and processing of DNA lesions. UvrC both incises the 5' and 3' sides of the lesion. The N-terminal half is responsible for the 3' incision and the C-terminal half is responsible for the 5' incision. The polypeptide is UvrABC system protein C (Haloarcula marismortui (strain ATCC 43049 / DSM 3752 / JCM 8966 / VKM B-1809) (Halobacterium marismortui)).